We begin with the raw amino-acid sequence, 302 residues long: Recombination-associated protein RdgC (302 aa).

The protein belongs to the RdgC family.

The protein localises to the cytoplasm. The protein resides in the nucleoid. Its function is as follows. May be involved in recombination. The sequence is that of Recombination-associated protein RdgC from Haemophilus influenzae (strain PittGG).